We begin with the raw amino-acid sequence, 368 residues long: Serine/threonine-protein phosphatase PP2A-like PPG1 (368 aa).

The Mn(2+) site is built by aspartate 50, histidine 52, aspartate 78, and asparagine 110. The Proton donor role is filled by histidine 111. Mn(2+) is bound by residues histidine 161 and histidine 247.

This sequence belongs to the PPP phosphatase family. PP-2A subfamily. Inactivated in a complex with phosphatase methylesterase PPE1 (PP2Ai). Interacts with phosphatase 2A activator RRD1, which can reactivate PP2Ai by dissociating the catalytic subunit from the complex. Interacts with TAP42. The cofactor is Mn(2+). Reversibly methyl esterified on Leu-368 by leucine carboxyl methyltransferase 1 (PPM1) and protein phosphatase methylesterase 1 (PPE1). Carboxyl methylation influences the affinity of the catalytic subunit for the different regulatory subunits, thereby modulating the PP2A holoenzyme's substrate specificity, enzyme activity and cellular localization.

It carries out the reaction O-phospho-L-seryl-[protein] + H2O = L-seryl-[protein] + phosphate. It catalyses the reaction O-phospho-L-threonyl-[protein] + H2O = L-threonyl-[protein] + phosphate. Functionally, involved in glycogen accumulation. The polypeptide is Serine/threonine-protein phosphatase PP2A-like PPG1 (PPG1) (Saccharomyces cerevisiae (strain ATCC 204508 / S288c) (Baker's yeast)).